Consider the following 670-residue polypeptide: UvrABC system protein B (670 aa).

Residues 25 to 412 enclose the Helicase ATP-binding domain; the sequence is EGLEAGLSHQ…AGRVIEQVVR (388 aa). An ATP-binding site is contributed by 38 to 45; it reads GVTGSGKT. A Beta-hairpin motif is present at residues 91 to 114; it reads YYDYYQPEAYVPSSDTYIEKDSSI. Positions 429–582 constitute a Helicase C-terminal domain; sequence QVDDLLSQIR…QIAFNEAHGI (154 aa). Positions 631–666 constitute a UVR domain; sequence SKRIRQLEEKMYQLARDLEFEAAAQLRDEIQTLRER.

The protein belongs to the UvrB family. Forms a heterotetramer with UvrA during the search for lesions. Interacts with UvrC in an incision complex.

It is found in the cytoplasm. The UvrABC repair system catalyzes the recognition and processing of DNA lesions. A damage recognition complex composed of 2 UvrA and 2 UvrB subunits scans DNA for abnormalities. Upon binding of the UvrA(2)B(2) complex to a putative damaged site, the DNA wraps around one UvrB monomer. DNA wrap is dependent on ATP binding by UvrB and probably causes local melting of the DNA helix, facilitating insertion of UvrB beta-hairpin between the DNA strands. Then UvrB probes one DNA strand for the presence of a lesion. If a lesion is found the UvrA subunits dissociate and the UvrB-DNA preincision complex is formed. This complex is subsequently bound by UvrC and the second UvrB is released. If no lesion is found, the DNA wraps around the other UvrB subunit that will check the other stand for damage. The polypeptide is UvrABC system protein B (Pseudomonas aeruginosa (strain ATCC 15692 / DSM 22644 / CIP 104116 / JCM 14847 / LMG 12228 / 1C / PRS 101 / PAO1)).